Reading from the N-terminus, the 1121-residue chain is Linoleate 10R-lipoxygenase (1121 aa).

Residues 1-66 (MLRRFSSTFK…NEKKGNSVSP (66 aa)) form a disordered region. The segment covering 22–36 (TASSSSAAVANTNNN) has biased composition (low complexity). Residues 50 to 61 (SSSDDDRNEKKG) are compositionally biased toward basic and acidic residues. The active-site Proton acceptor is H253. D254, S269, Y271, D273, and S275 together coordinate Ca(2+).

Belongs to the peroxidase family.

The enzyme catalyses (9Z,12Z)-octadecadienoate + O2 = (8E,10R,12Z)-10-hydroperoxyoctadeca-8,12-dienoate. Functionally, responsible for the synthesis of various fatty acid-derived oxylipins. Oxidizes linoleic acid primarily to 10R-hydroperoxy-8,12-octadecadienoic acid (10R-HPODE) and, to a lesser extent, 8R-hydroperoxylinoleic acid (8R-HPODE). Also synthesizes 10-hydroxy-octadeca-8,12-dienoic acid (10-HODE) from linoleic acid and primarily 8R-hydroxy-octadeca-9-monoenoic acid (8-HOME, also known as psiB beta) from oleic acid. 8-HOME forms part of psi factor, a mixture of oxylipins that regulates the balance between sexual and asexual spore production. Displays epoxyalcohol synthase activity. Plays a role in the synthesis of prostaglandins which may be required for pathogenicity. This Aspergillus fumigatus (strain ATCC MYA-4609 / CBS 101355 / FGSC A1100 / Af293) (Neosartorya fumigata) protein is Linoleate 10R-lipoxygenase.